Reading from the N-terminus, the 35-residue chain is Entry-fusion complex protein OPG076 (35 aa).

Residues 2–22 (LVVIMFFIAFAFCSWLSYSYL) traverse the membrane as a helical segment. Residues 23 to 35 (RPYISTKELNKSR) are Virion surface-facing.

It belongs to the orthopoxvirus OPG076 family. In terms of assembly, component of the entry fusion complex (EFC) composed of OPG053, OPG076, OPG086, OPG094, OPG095, OPG099, OPG107, OPG143, OPG104, OPG147 and OPG155. Except for OPG095 and OPG053, each of the EFC proteins is required for assembly or stability of the complex. In terms of processing, unglycosylated because produced in viral factories instead of the classic ER -Golgi route.

It is found in the virion membrane. Functionally, component of the entry fusion complex (EFC), which consists of 11 proteins. During cell infection, this complex mediates entry of the virion core into the host cytoplasm by a two-step mechanism consisting of lipid mixing of the viral and cellular membranes and subsequent pore formation. The protein is Entry-fusion complex protein OPG076 (OPG076) of Vaccinia virus (strain Copenhagen) (VACV).